A 376-amino-acid chain; its full sequence is Putative C-mannosyltransferase DPY19L2P2 (376 aa).

Residue asparagine 32 is glycosylated (N-linked (GlcNAc...) asparagine). Helical transmembrane passes span 52 to 72, 107 to 127, 154 to 174, 182 to 202, 233 to 253, and 299 to 319; these read ACFYVGVIFILNGLMMGLFFI, LRESFSYPFLVLQMYVLTLIL, AQFILFTQIASLFPMYVVGYI, IIYMNMISVTLSFILMFGNSM, LNCWLIQGSAWWCGTIILKFL, and LLIYTKTLLLPVVMVITCFIF.

The protein belongs to the dpy-19 family. As to expression, fibroblast, lung, lymphoblast, spleen and testis.

Its subcellular location is the membrane. In terms of biological role, probable C-mannosyltransferase that mediates C-mannosylation of tryptophan residues on target proteins. The protein is Putative C-mannosyltransferase DPY19L2P2 (DPY19L2P2) of Homo sapiens (Human).